Here is a 2694-residue protein sequence, read N- to C-terminus: Teneurin-3 (2694 aa).

Disordered stretches follow at residues 1–45 (MDVK…SSSE), 106–132 (PSSL…DNQS), and 161–198 (TQPA…PSVT). The Teneurin N-terminal domain occupies 1–306 (MDVKERRPYC…KSSKYCSWRC (306 aa)). Residues 1-312 (MDVKERRPYC…SWRCTALSAM (312 aa)) lie on the Cytoplasmic side of the membrane. Over residues 163-184 (PAPSHSCNEQPSNQHQQGQSTL) the composition is skewed to polar residues. Residues 313-333 (AVSILLSVLLCYCIAMHLFGL) form a helical membrane-spanning segment. The Extracellular portion of the chain corresponds to 334 to 2694 (NWQLQETEGY…FLRQSEIGKR (2361 aa)). 2 N-linked (GlcNAc...) asparagine glycosylation sites follow: N374 and N413. EGF-like domains follow at residues 508 to 539 (TLTE…PDCS), 540 to 570 (RAAC…TECD), 572 to 604 (PSNQ…DNCE), 605 to 636 (EVDC…NNCE), 638 to 671 (LKTM…PDCS), 672 to 703 (IEVC…VCDL), 704 to 733 (KACH…EHCT), and 734 to 768 (VEGC…AGCD). Disulfide bonds link C512–C522, C516–C527, C529–C538, C547–C558, C560–C569, C576–C587, C581–C592, C594–C603, C608–C619, C613–C624, C626–C635, C646–C659, C661–C670, C675–C685, C679–C690, C692–C701, C706–C716, C710–C721, C723–C732, C737–C747, C741–C756, and C758–C767. N664 carries N-linked (GlcNAc...) asparagine glycosylation. N-linked (GlcNAc...) asparagine glycosylation is found at N854, N877, and N1048. 5 NHL repeats span residues 1166–1192 (LLAP…RRIF), 1194–1238 (SGNV…PKAL), 1264–1308 (ARCG…NGII), 1325–1365 (CDNS…ITEN), and 1452–1495 (CYQT…IRHN). An N-linked (GlcNAc...) asparagine glycan is attached at N1196. One copy of the YD 1 repeat lies at 1505-1524 (FEVASPASQELYVFDSNGTH). Residues N1521 and N1538 are each glycosylated (N-linked (GlcNAc...) asparagine). YD repeat units lie at residues 1541–1561 (YSNE…LRVR), 1604–1623 (YHGN…WTTF), and 1624–1646 (YDYD…TSLI). N-linked (GlcNAc...) asparagine glycosylation is found at N1634, N1671, N1729, and N1814. YD repeat units lie at residues 1817–1836 (YSST…ERVE), 1858–1876 (YLDK…YIFD), 1877–1897 (YDLQ…HTMQ), 1904–1921 (YYRN…VTVD), 1922–1943 (YSED…VLYK), 1944–1961 (YRRQ…TRVS), 1964–1984 (YDET…FICS), 1987–2007 (YRQI…DGMV), 2015–2034 (YDNS…TPLP), 2040–2057 (FDDI…GVIY), 2058–2084 (YDIN…IKEI), 2086–2099 (YEIF…ITIQ), 2100–2123 (YDNM…TKYG), 2126–2146 (YDVD…WRYN), 2147–2167 (YDLN…LTPL), 2169–2189 (YDLR…DEDG), 2201–2221 (YNSK…TIQY), and 2223–2243 (YDGL…LQFF). Residue N1915 is glycosylated (N-linked (GlcNAc...) asparagine). N2118 carries N-linked (GlcNAc...) asparagine glycosylation. Residue N2258 is glycosylated (N-linked (GlcNAc...) asparagine). The stretch at 2269–2310 (YDLQGHLFAMEISSGEEFYIACDNTGTPLAVFSSNGLLLKQV) is one YD 23 repeat. A glycan (N-linked (GlcNAc...) asparagine) is linked at N2571.

This sequence belongs to the tenascin family. Teneurin subfamily. In terms of assembly, homodimer; disulfide-linked; to mediate homophilic cell adhesion. Expressed by retinal ganglion cells and their presynaptic amacrine and postsynaptic tectal cell targets.

It localises to the cell membrane. It is found in the cell projection. The protein localises to the axon. Functionally, involved in neural development by regulating the establishment of proper connectivity within the nervous system. Acts in both pre- and postsynaptic neurons in the hippocampus to control the assembly of a precise topographic projection: required in both CA1 and subicular neurons for the precise targeting of proximal CA1 axons to distal subiculum, probably by promoting homophilic cell adhesion. Required by retinal ganglion cells for acquisition of their correct morphological and functional connectivity, thereby playing a key role in the development of the visual pathway. In Danio rerio (Zebrafish), this protein is Teneurin-3 (tenm3).